Reading from the N-terminus, the 494-residue chain is Myocyte-specific enhancer factor 2A (494 aa).

The region spanning 3–57 (RKKIQITRIMDERNRQVTFTKRKFGLMKKAYELSVLCDCEIALIIFNSSNKLFQY) is the MADS-box domain. A DNA-binding region (mef2-type) is located at residues 58-86 (ASTDMDKVLLKYTEYNEPHESRTNSDIVE). Phosphoserine; by CK2 is present on serine 59. Phosphoserine occurs at positions 98 and 108. Residues 171-181 (TLTDSSMLSPP) are compositionally biased toward low complexity. Positions 171–218 (TLTDSSMLSPPQTTLHRNVSPGAPQRPPSTGNAGGMLSTTDLIVPNGA) are disordered. Phosphoserine is present on serine 233. The tract at residues 238 to 268 (GATGANSLGKVMPTKSPPPPGGGNLGMNSRK) is disordered. Lysine 247 carries the post-translational modification N6-acetyllysine. Serine 253 carries the post-translational modification Phosphoserine. A required for interaction with MAPKs region spans residues 264–281 (MNSRKPDLRVVIPPSSKG). Phosphothreonine; by MAPK7 and MAPK14 occurs at positions 302 and 309. The residue at position 345 (serine 345) is a Phosphoserine; by MAPK7. Residues 380–392 (SNLSINTNQNINI) show a composition bias toward polar residues. Residues 380-494 (SNLSINTNQN…KRMRMDAWVT (115 aa)) form a disordered region. Lysine 393 is modified (N6-acetyllysine; alternate). A Glycyl lysine isopeptide (Lys-Gly) (interchain with G-Cter in SUMO); alternate cross-link involves residue lysine 393. A Phosphoserine; by CDK5 modification is found at serine 398. At threonine 405 the chain carries Phosphothreonine. Pro residues predominate over residues 418 to 432 (QPPPPPPQPQPPQPQ). At serine 440 the chain carries Phosphoserine. Positions 440–453 (SPVDSLSSSSSSYD) are enriched in low complexity. Basic and acidic residues-rich tracts occupy residues 454–464 (GSDREDPRGDF) and 475–494 (NTED…AWVT).

Binds DNA as a homo- or heterodimer. Dimerizes with MEF2D. Interacts with HDAC7. Interacts with PIAS1; the interaction enhances sumoylation. Interacts with HDAC4, HDAC9 and SLC2A4RG. Interacts (via the N-terminal) with MAPK7; the interaction results in the phosphorylation and transcriptional activity of MEF2A. Constitutive phosphorylation on Ser-398 promotes Lys-393 sumoylation thus preventing acetylation at this site. Dephosphorylation on Ser-398 by PPP3CA upon neuron depolarization promotes a switch from sumoylation to acetylation on residue Lys-393 leading to inhibition of dendrite claw differentiation. Phosphorylation on Thr-302 and Thr-309 are the main sites involved in p38 MAPK signaling and activate transcription. Phosphorylated on these sites by MAPK14/p38alpha and MAPK11/p38beta, but not by MAPK13/p38delta nor by MAPK12/p38gamma. Phosphorylation on Ser-398 by CDK5 induced by neurotoxicity inhibits MEF2A transcriptional activation leading to apoptosis of cortical neurons. Phosphorylation on Thr-302, Thr-309 and Ser-345 can be induced by EGF. In terms of processing, sumoylation on Lys-393 is enhanced by PIAS1 and represses transcriptional activity. Phosphorylation on Ser-398 is required for sumoylation. Has no effect on nuclear location nor on DNA binding. Sumoylated with SUMO1 and, to a lesser extent with SUMO2 and SUMO3. PIASx facilitates sumoylation in postsynaptic dendrites in the cerebellar cortex and promotes their morphogenesis. Post-translationally, acetylation on Lys-393 activates transcriptional activity. Acetylated by p300 on several sites in diffentiating myocytes. Acetylation on Lys-4 increases DNA binding and transactivation. Hyperacetylation by p300 leads to enhanced cardiac myocyte growth and heart failure. Proteolytically cleaved in cerebellar granule neurons on several sites by caspase 3 and caspase 7 following neurotoxicity. Preferentially cleaves the CDK5-mediated hyperphosphorylated form which leads to neuron apoptosis and transcriptional inactivation.

The protein resides in the nucleus. In terms of biological role, transcriptional activator which binds specifically to the MEF2 element, 5'-YTA[AT](4)TAR-3', found in numerous muscle-specific genes. Also involved in the activation of numerous growth factor- and stress-induced genes. Mediates cellular functions not only in skeletal and cardiac muscle development, but also in neuronal differentiation and survival. Plays diverse roles in the control of cell growth, survival and apoptosis via p38 MAPK signaling in muscle-specific and/or growth factor-related transcription. In cerebellar granule neurons, phosphorylated and sumoylated MEF2A represses transcription of NUR77 promoting synaptic differentiation. Associates with chromatin to the ZNF16 promoter. This Pongo abelii (Sumatran orangutan) protein is Myocyte-specific enhancer factor 2A (MEF2A).